The chain runs to 313 residues: Pyrimidine-specific ribonucleoside hydrolase RihB (313 aa).

The Proton acceptor role is filled by glutamate 11. Residues glutamate 11, aspartate 16, and valine 124 each contribute to the Ca(2+) site. 2 residues coordinate substrate: glutamine 227 and histidine 239. Aspartate 240 is a Ca(2+) binding site.

It belongs to the IUNH family. RihB subfamily. As to quaternary structure, homotetramer. The cofactor is Ca(2+).

The enzyme catalyses a pyrimidine ribonucleoside + H2O = a pyrimidine nucleobase + D-ribose. Hydrolyzes cytidine or uridine to ribose and cytosine or uracil, respectively. Has a clear preference for cytidine over uridine. Strictly specific for ribonucleosides. The sequence is that of Pyrimidine-specific ribonucleoside hydrolase RihB from Shigella flexneri serotype 5b (strain 8401).